An 89-amino-acid polypeptide reads, in one-letter code: Bacterial microcompartment shell vertex protein GrpN (89 aa).

The region spanning 1–83 is the BMV domain; that stretch reads MYLGKVIGTV…IDAAVVGIVD (83 aa).

The protein belongs to the CcmL/EutN family. In terms of assembly, homopentamer with a small central pore.

Its subcellular location is the bacterial microcompartment. Probably forms vertices in the bacterial microcompartment (BMC) predicted to be involved in glycyl radical-based 1,2-propanediol metabolism in this organism. The sequence is that of Bacterial microcompartment shell vertex protein GrpN from Rhodospirillum rubrum (strain F11).